Consider the following 603-residue polypeptide: Peroxisomal targeting signal receptor (603 aa).

A Glycyl cysteine thioester (Cys-Gly) (interchain with G-Cter in ubiquitin) cross-link involves residue Cys-10. Residues 11-33 (SANSNAIAQFNKHTQQDRSLQRQ) are amphipathic helix 1 (AH1). Lys-22 is covalently cross-linked (Glycyl lysine isopeptide (Lys-Gly) (interchain with G-Cter in ubiquitin)). A disordered region spans residues 23-49 (HTQQDRSLQRQAANQQGIVQNGQGFKK). Residues 31–45 (QRQAANQQGIVQNGQ) show a composition bias toward polar residues. The amphipathic helix 2 (AH2) stretch occupies residues 58–76 (RQNMDQFMNNGPSQSNFQF). Short sequence motifs (wxxxF/Y motif) lie at residues 99–103 (WTNEF), 128–132 (WATEF), and 192–196 (WDNQF). Positions 232–248 (FQEVWDSLNSEEVENDF) are amphipathic helix 4 (AH4). Positions 271 to 275 (WEKDF) match the WxxxF/Y motif 4 motif. 5 TPR repeats span residues 304–338 (ESDP…NEGH), 339–372 (INAW…HPEN), 449–482 (PDVQ…KPDD), 484–516 (VLWN…KPTF), and 518–550 (RARY…HQVE).

The protein belongs to the peroxisomal targeting signal receptor family. As to quaternary structure, interacts (via WxxxF/Y and LVxEF motifs) with PEX14; promoting translocation through the PEX13-PEX14 docking complex. Monoubiquitinated at Cys-10 by PEX2 during PEX5 passage through the retrotranslocation channel: monoubiquitination acts as a signal for PEX5 extraction and is required for proper export from peroxisomes and recycling. When PEX5 recycling is compromised, polyubiquitinated at Lys-22 by PEX10 during its passage through the retrotranslocation channel, leading to its degradation.

It is found in the cytoplasm. Its subcellular location is the cytosol. The protein localises to the peroxisome matrix. Its function is as follows. Receptor that mediates peroxisomal import of proteins containing a C-terminal PTS1-type tripeptide peroxisomal targeting signal (SKL-type). Binds to cargo proteins containing a PTS1 peroxisomal targeting signal in the cytosol, and translocates them into the peroxisome matrix by passing through the PEX13-PEX14 docking complex along with cargo proteins. PEX5 receptor is then retrotranslocated into the cytosol, leading to release of bound cargo in the peroxisome matrix, and reset for a subsequent peroxisome import cycle. This Debaryomyces hansenii (strain ATCC 36239 / CBS 767 / BCRC 21394 / JCM 1990 / NBRC 0083 / IGC 2968) (Yeast) protein is Peroxisomal targeting signal receptor (PEX5).